A 120-amino-acid chain; its full sequence is ESAT-6-like protein EsxQ (120 aa).

Belongs to the WXG100 family. ESAT-6 subfamily.

It is found in the secreted. This Mycobacterium bovis (strain ATCC BAA-935 / AF2122/97) protein is ESAT-6-like protein EsxQ.